The sequence spans 359 residues: Histidinol-phosphate aminotransferase (359 aa).

Residue Lys-217 is modified to N6-(pyridoxal phosphate)lysine.

This sequence belongs to the class-II pyridoxal-phosphate-dependent aminotransferase family. Histidinol-phosphate aminotransferase subfamily. As to quaternary structure, homodimer. Pyridoxal 5'-phosphate is required as a cofactor.

The catalysed reaction is L-histidinol phosphate + 2-oxoglutarate = 3-(imidazol-4-yl)-2-oxopropyl phosphate + L-glutamate. Its pathway is amino-acid biosynthesis; L-histidine biosynthesis; L-histidine from 5-phospho-alpha-D-ribose 1-diphosphate: step 7/9. The polypeptide is Histidinol-phosphate aminotransferase (hisC) (Salmonella typhimurium (strain LT2 / SGSC1412 / ATCC 700720)).